A 372-amino-acid polypeptide reads, in one-letter code: Cytochrome b (372 aa).

4 helical membrane passes run 25–45 (FGSM…FLAV), 69–90 (WMMQ…YIHM), 105–125 (WLSG…GYVL), and 170–190 (FFAL…LHIM). Heme b-binding residues include His75 and His89. 2 residues coordinate heme b: His174 and His188. His193 provides a ligand contact to a ubiquinone. The next 4 membrane-spanning stretches (helical) occupy residues 218–238 (YKDL…ISFL), 280–300 (LGGA…PFTH), 312–332 (FMQL…WTAT), and 339–358 (YTTI…MSNL).

Belongs to the cytochrome b family. As to quaternary structure, the cytochrome bc1 complex contains 3 respiratory subunits (MT-CYB, CYC1 and UQCRFS1), 2 core proteins (UQCRC1 and UQCRC2) and probably 6 low-molecular weight proteins. Requires heme b as cofactor.

Its subcellular location is the mitochondrion inner membrane. Functionally, component of the ubiquinol-cytochrome c reductase complex (complex III or cytochrome b-c1 complex) that is part of the mitochondrial respiratory chain. The b-c1 complex mediates electron transfer from ubiquinol to cytochrome c. Contributes to the generation of a proton gradient across the mitochondrial membrane that is then used for ATP synthesis. This Sanzinia madagascariensis (Madagascar tree boa) protein is Cytochrome b (MT-CYB).